The following is a 330-amino-acid chain: Ketol-acid reductoisomerase (NADP(+)) (330 aa).

Positions 1 to 181 (MKVFYDSDFK…GLSRAGVIQT (181 aa)) constitute a KARI N-terminal Rossmann domain. NADP(+) contacts are provided by residues 24–27 (YGSQ), Arg47, Ser52, and 82–85 (DELQ). His107 is an active-site residue. An NADP(+)-binding site is contributed by Gly133. In terms of domain architecture, KARI C-terminal knotted spans 182–327 (TFKEETETDL…AKLRKMCGLE (146 aa)). Mg(2+) is bound by residues Asp190, Glu194, Glu226, and Glu230. A substrate-binding site is contributed by Ser251.

It belongs to the ketol-acid reductoisomerase family. Mg(2+) serves as cofactor.

The catalysed reaction is (2R)-2,3-dihydroxy-3-methylbutanoate + NADP(+) = (2S)-2-acetolactate + NADPH + H(+). It catalyses the reaction (2R,3R)-2,3-dihydroxy-3-methylpentanoate + NADP(+) = (S)-2-ethyl-2-hydroxy-3-oxobutanoate + NADPH + H(+). Its pathway is amino-acid biosynthesis; L-isoleucine biosynthesis; L-isoleucine from 2-oxobutanoate: step 2/4. It functions in the pathway amino-acid biosynthesis; L-valine biosynthesis; L-valine from pyruvate: step 2/4. Its function is as follows. Involved in the biosynthesis of branched-chain amino acids (BCAA). Catalyzes an alkyl-migration followed by a ketol-acid reduction of (S)-2-acetolactate (S2AL) to yield (R)-2,3-dihydroxy-isovalerate. In the isomerase reaction, S2AL is rearranged via a Mg-dependent methyl migration to produce 3-hydroxy-3-methyl-2-ketobutyrate (HMKB). In the reductase reaction, this 2-ketoacid undergoes a metal-dependent reduction by NADPH to yield (R)-2,3-dihydroxy-isovalerate. The protein is Ketol-acid reductoisomerase (NADP(+)) of Methanococcus maripaludis (strain C6 / ATCC BAA-1332).